A 152-amino-acid chain; its full sequence is Large ribosomal subunit protein uL15 (152 aa).

Residues 18 to 37 form a disordered region; it reads RVARGIGSGKGKTAGRGVKG. The segment covering 23–35 has biased composition (gly residues); sequence IGSGKGKTAGRGV.

It belongs to the universal ribosomal protein uL15 family. In terms of assembly, part of the 50S ribosomal subunit.

Binds to the 23S rRNA. The chain is Large ribosomal subunit protein uL15 from Rickettsia bellii (strain OSU 85-389).